The following is a 143-amino-acid chain: 3-hydroxyacyl-[acyl-carrier-protein] dehydratase FabZ (143 aa).

The active site involves His49.

It belongs to the thioester dehydratase family. FabZ subfamily.

The protein localises to the cytoplasm. It catalyses the reaction a (3R)-hydroxyacyl-[ACP] = a (2E)-enoyl-[ACP] + H2O. Involved in unsaturated fatty acids biosynthesis. Catalyzes the dehydration of short chain beta-hydroxyacyl-ACPs and long chain saturated and unsaturated beta-hydroxyacyl-ACPs. In Wolbachia pipientis wMel, this protein is 3-hydroxyacyl-[acyl-carrier-protein] dehydratase FabZ.